The primary structure comprises 220 residues: Adenylate kinase (220 aa).

10 to 15 (GSGKST) provides a ligand contact to ATP. An NMP region spans residues 30-59 (ASGDIIRAEIKARTPLGIEMERYLSRGDLI). AMP-binding positions include arginine 36, 57–59 (DLI), 83–86 (GYPR), and glutamine 90. The interval 124-161 (GRRICSKCGAVYHVEFNPPKVPGKCDICGGELIQRPDD) is LID. Arginine 125 is a binding site for ATP. Positions 128 and 131 each coordinate Zn(2+). Residue 134–135 (VY) coordinates ATP. Cysteine 148 and cysteine 151 together coordinate Zn(2+). The AMP site is built by arginine 158 and arginine 169. An ATP-binding site is contributed by glycine 197.

Belongs to the adenylate kinase family. Monomer.

It localises to the cytoplasm. The catalysed reaction is AMP + ATP = 2 ADP. Its pathway is purine metabolism; AMP biosynthesis via salvage pathway; AMP from ADP: step 1/1. Its function is as follows. Catalyzes the reversible transfer of the terminal phosphate group between ATP and AMP. Plays an important role in cellular energy homeostasis and in adenine nucleotide metabolism. The protein is Adenylate kinase of Pyrococcus abyssi (strain GE5 / Orsay).